The chain runs to 675 residues: Transketolase, chloroplastic (675 aa).

Residues histidine 78 and 127 to 129 (GPL) contribute to the thiamine diphosphate site. Residue aspartate 168 participates in Mg(2+) binding. Thiamine diphosphate-binding residues include glycine 169, glutamate 173, and asparagine 198. Mg(2+)-binding residues include asparagine 198 and isoleucine 200. Residue histidine 275 coordinates thiamine diphosphate. Positions 275, 369, and 396 each coordinate substrate. Thiamine diphosphate contacts are provided by residues glutamate 423 and 450–453 (FTDY). Glutamate 423 functions as the Proton donor in the catalytic mechanism. Histidine 474, aspartate 482, and arginine 533 together coordinate substrate.

Homodimer. The cofactor is Mg(2+). It depends on Ca(2+) as a cofactor. Mn(2+) serves as cofactor. Co(2+) is required as a cofactor. Requires thiamine diphosphate as cofactor.

Its subcellular location is the plastid. It localises to the chloroplast thylakoid membrane. It catalyses the reaction D-sedoheptulose 7-phosphate + D-glyceraldehyde 3-phosphate = aldehydo-D-ribose 5-phosphate + D-xylulose 5-phosphate. Its pathway is carbohydrate biosynthesis; Calvin cycle. Its function is as follows. Catalyzes the reversible transfer of a two-carbon ketol group from fructose-6-phosphate or sedoheptulose-7-phosphate to glyceraldehyde-3-phosphate to yield xylulose-5-phosphate and erythrose-4-phosphate or ribose-5-phosphate, respectively. The sequence is that of Transketolase, chloroplastic from Zea mays (Maize).